The primary structure comprises 548 residues: Formyltransferase/hydrolase complex Fhc subunit A (548 aa).

The Zn(2+) site is built by His-57, His-59, and His-227.

Belongs to the metallo-dependent hydrolases superfamily. FwdA/FmdA family. In terms of assembly, octaheteromer. Part of the formyltransferase/hydrolase complex fhc; composed of FhcA, FhcB, FhcC and FhcD. The cofactor is Zn(2+).

It localises to the cytoplasm. The catalysed reaction is N-formylmethanofuran + H2O = methanofuran + formate. It participates in one-carbon metabolism; formaldehyde degradation; formate from formaldehyde (H(4)MPT route): step 4/5. In terms of biological role, involved in the transformation of 5-formyl tetrahydromethanopterin (5-formyl-H(4)MPT) to methanofuran (MFR) and formate via the formylmethanofuran (formyl-MFR). May be catalyze the hydrolysis of formylmethanofuran (formyl-MFR) to yield formate and MFR. The chain is Formyltransferase/hydrolase complex Fhc subunit A (fhcA) from Methylorubrum extorquens (strain ATCC 14718 / DSM 1338 / JCM 2805 / NCIMB 9133 / AM1) (Methylobacterium extorquens).